We begin with the raw amino-acid sequence, 90 residues long: uncharacterized protein (90 aa).

Residues 15-34 (HVLAISTFIATAAVASYFTT) traverse the membrane as a helical segment. Residues 34 to 65 (TKPKTKNEGKNSSALSQQKSGESSNSDAMGKD) form a disordered region. Polar residues predominate over residues 43–60 (KNSSALSQQKSGESSNSD). N-linked (GlcNAc...) asparagine glycosylation occurs at Asn44.

The protein localises to the mitochondrion membrane. This is an uncharacterized protein from Saccharomyces cerevisiae (strain ATCC 204508 / S288c) (Baker's yeast).